The sequence spans 680 residues: tRNA 5-methylaminomethyl-2-thiouridine biosynthesis bifunctional protein MnmC (680 aa).

Residues 1–245 are tRNA (mnm(5)s(2)U34)-methyltransferase; the sequence is MSHPPIQTAT…KREMLTGILP (245 aa). Residues 270 to 680 form an FAD-dependent cmnm(5)s(2)U34 oxidoreductase region; the sequence is IGGGIVSALT…PVQQRVSVLS (411 aa).

It in the N-terminal section; belongs to the methyltransferase superfamily. tRNA (mnm(5)s(2)U34)-methyltransferase family. In the C-terminal section; belongs to the DAO family. FAD serves as cofactor.

The protein localises to the cytoplasm. It carries out the reaction 5-aminomethyl-2-thiouridine(34) in tRNA + S-adenosyl-L-methionine = 5-methylaminomethyl-2-thiouridine(34) in tRNA + S-adenosyl-L-homocysteine + H(+). In terms of biological role, catalyzes the last two steps in the biosynthesis of 5-methylaminomethyl-2-thiouridine (mnm(5)s(2)U) at the wobble position (U34) in tRNA. Catalyzes the FAD-dependent demodification of cmnm(5)s(2)U34 to nm(5)s(2)U34, followed by the transfer of a methyl group from S-adenosyl-L-methionine to nm(5)s(2)U34, to form mnm(5)s(2)U34. This chain is tRNA 5-methylaminomethyl-2-thiouridine biosynthesis bifunctional protein MnmC, found in Yersinia enterocolitica serotype O:8 / biotype 1B (strain NCTC 13174 / 8081).